We begin with the raw amino-acid sequence, 356 residues long: Phosphate acyltransferase (356 aa).

It belongs to the PlsX family. Homodimer. Probably interacts with PlsY.

It is found in the cytoplasm. The catalysed reaction is a fatty acyl-[ACP] + phosphate = an acyl phosphate + holo-[ACP]. Its pathway is lipid metabolism; phospholipid metabolism. Functionally, catalyzes the reversible formation of acyl-phosphate (acyl-PO(4)) from acyl-[acyl-carrier-protein] (acyl-ACP). This enzyme utilizes acyl-ACP as fatty acyl donor, but not acyl-CoA. The protein is Phosphate acyltransferase of Mesorhizobium japonicum (strain LMG 29417 / CECT 9101 / MAFF 303099) (Mesorhizobium loti (strain MAFF 303099)).